Consider the following 371-residue polypeptide: Aminomethyltransferase (371 aa).

This sequence belongs to the GcvT family. As to quaternary structure, the glycine cleavage system is composed of four proteins: P, T, L and H.

It catalyses the reaction N(6)-[(R)-S(8)-aminomethyldihydrolipoyl]-L-lysyl-[protein] + (6S)-5,6,7,8-tetrahydrofolate = N(6)-[(R)-dihydrolipoyl]-L-lysyl-[protein] + (6R)-5,10-methylene-5,6,7,8-tetrahydrofolate + NH4(+). Functionally, the glycine cleavage system catalyzes the degradation of glycine. The chain is Aminomethyltransferase from Leptospira borgpetersenii serovar Hardjo-bovis (strain JB197).